The sequence spans 244 residues: U11/U12 small nuclear ribonucleoprotein 35 kDa protein (244 aa).

Residues 51 to 129 enclose the RRM domain; that stretch reads LTLFVARLNS…HEIFVDYELE (79 aa). Residues 146–162 show a composition bias toward basic and acidic residues; the sequence is GKKESGQLRFGGRDRPF. The tract at residues 146 to 244 is disordered; that stretch reads GKKESGQLRF…KTRDKRDRSK (99 aa). Lysine 172 participates in a covalent cross-link: Glycyl lysine isopeptide (Lys-Gly) (interchain with G-Cter in SUMO2). 2 stretches are compositionally biased toward basic and acidic residues: residues 173-185 and 192-244; these read NEPH…ERRE and RHWD…DRSK.

As to quaternary structure, component of the U11/U12 snRNPs that are part of the U12-type spliceosome.

Its subcellular location is the nucleus. The chain is U11/U12 small nuclear ribonucleoprotein 35 kDa protein (Snrnp35) from Rattus norvegicus (Rat).